Here is a 474-residue protein sequence, read N- to C-terminus: MTKKLHIKTWGCQMNEYDSSKMADLLGSTHGYQWTDNAEEADVLLLNTCSIREKAQEKVFAMLGRWRLLKEKNPALIIGVGGCVASQEGEHIRSRAPCVDVVFGPQTLHRLPEMLNHVQGTRSPIVDISFPEIEKFDRLPEPRAEGPTAFVSIMEGCNKYCTFCVVPYTRGEEVSRPSDDVLFEVAQLAAQGVREVNLLGQNVNAYRGATYDGGICSFAELLRLVAAIDGIDRIRYTTSHPIEFTDDIIAVYEDTPELVSFLHLPVQSGSDRILTMMKRAHTALEYKAIIRKLRKARPDIQLSSDFIIGFPGETQADFEQTMNLIAEINFDTSFSFIYSSRPGTPAADMVDDVSEDEKKQRLYILQDRINQQVLQFSRRMLGTVQRILVEGTSRKSVMELAGRTACNRMVNFEGTPDMIGQFVDVEITEVLTNSLRGTVVRTEQQMDLRVHESPQSVIARTRKENALGVGIYQP.

The MTTase N-terminal domain maps to 3 to 120 (KKLHIKTWGC…LPEMLNHVQG (118 aa)). [4Fe-4S] cluster-binding residues include C12, C49, C83, C157, C161, and C164. A Radical SAM core domain is found at 143–375 (RAEGPTAFVS…QDRINQQVLQ (233 aa)). The TRAM domain maps to 378–441 (RRMLGTVQRI…TNSLRGTVVR (64 aa)).

It belongs to the methylthiotransferase family. MiaB subfamily. As to quaternary structure, monomer. Requires [4Fe-4S] cluster as cofactor.

It localises to the cytoplasm. The enzyme catalyses N(6)-dimethylallyladenosine(37) in tRNA + (sulfur carrier)-SH + AH2 + 2 S-adenosyl-L-methionine = 2-methylsulfanyl-N(6)-dimethylallyladenosine(37) in tRNA + (sulfur carrier)-H + 5'-deoxyadenosine + L-methionine + A + S-adenosyl-L-homocysteine + 2 H(+). Catalyzes the methylthiolation of N6-(dimethylallyl)adenosine (i(6)A), leading to the formation of 2-methylthio-N6-(dimethylallyl)adenosine (ms(2)i(6)A) at position 37 in tRNAs that read codons beginning with uridine. This is tRNA-2-methylthio-N(6)-dimethylallyladenosine synthase from Serratia proteamaculans (strain 568).